Consider the following 160-residue polypeptide: Cytochrome b6-f complex subunit 4 (160 aa).

Helical transmembrane passes span 36 to 56 (LLYI…GLAV), 95 to 115 (LLGI…PFIE), and 128 to 148 (IAMA…IGAC).

The protein belongs to the cytochrome b family. PetD subfamily. The 4 large subunits of the cytochrome b6-f complex are cytochrome b6, subunit IV (17 kDa polypeptide, PetD), cytochrome f and the Rieske protein, while the 4 small subunits are PetG, PetL, PetM and PetN. The complex functions as a dimer.

It localises to the cellular thylakoid membrane. In terms of biological role, component of the cytochrome b6-f complex, which mediates electron transfer between photosystem II (PSII) and photosystem I (PSI), cyclic electron flow around PSI, and state transitions. In Prochlorococcus marinus (strain MIT 9313), this protein is Cytochrome b6-f complex subunit 4.